Consider the following 235-residue polypeptide: Small ribosomal subunit protein uS2c (235 aa).

The protein belongs to the universal ribosomal protein uS2 family.

Its subcellular location is the plastid. The protein localises to the chloroplast. This chain is Small ribosomal subunit protein uS2c (rps2), found in Cryptomeria japonica (Japanese cedar).